Reading from the N-terminus, the 79-residue chain is Small ribosomal subunit protein bS18 (79 aa).

The protein belongs to the bacterial ribosomal protein bS18 family. As to quaternary structure, part of the 30S ribosomal subunit. Forms a tight heterodimer with protein bS6.

In terms of biological role, binds as a heterodimer with protein bS6 to the central domain of the 16S rRNA, where it helps stabilize the platform of the 30S subunit. The sequence is that of Small ribosomal subunit protein bS18 (rpsR) from Bacillus subtilis (strain 168).